The chain runs to 248 residues: Probable transcriptional regulatory protein PSPA7_4544 (248 aa).

The protein belongs to the TACO1 family.

The protein resides in the cytoplasm. This chain is Probable transcriptional regulatory protein PSPA7_4544, found in Pseudomonas paraeruginosa (strain DSM 24068 / PA7) (Pseudomonas aeruginosa (strain PA7)).